Consider the following 294-residue polypeptide: MKNPCNVIAIIGKPRDQQAIQTHRELYEWLTSEGYQVFIDDRLAAILDEIPQSQFASLVELGKNADLAIVVGGDGNMLGAARILSRFDVAVIGVNRGNLGFLTDLNPDDFKEALKAVLKGKYIEEERFLLEAEIHRHGQIKSHNAALNEAVLHPGQVAHMIEFEVYIDDSFAFSLRADGLIVSTPTGSTAYSLSGGGPILSPSLNAISLVPMFPHTLSSRPLVVDGKRRIKLIVSPENRGTQEVSCDGQVSLPVSPGDEIHIYQSPNVLKLIHPKDYSYYHVLRNKLGWSSKLF.

D74 acts as the Proton acceptor in catalysis. NAD(+) contacts are provided by residues 74–75 (DG), 148–149 (NE), H159, R176, D178, 189–194 (TAYSLS), and Q249.

This sequence belongs to the NAD kinase family. It depends on a divalent metal cation as a cofactor.

The protein resides in the cytoplasm. It carries out the reaction NAD(+) + ATP = ADP + NADP(+) + H(+). Functionally, involved in the regulation of the intracellular balance of NAD and NADP, and is a key enzyme in the biosynthesis of NADP. Catalyzes specifically the phosphorylation on 2'-hydroxyl of the adenosine moiety of NAD to yield NADP. This is NAD kinase from Vibrio campbellii (strain ATCC BAA-1116).